Consider the following 187-residue polypeptide: MSFKLFDKWDVTEVTVEDMGLQNYVCLDEIVVPHTMGRHVKRQFAKSKVSIVERLMNKIMRTERNSGKKNKAYSIVEDALEIINNKTKQNPVQVLVKAVENTAPREETTRIKYGGIGYQIAVDIAPQRRVDLSLGFITKGAMQSAFKNKKSAAQCLADEILLASDEDSRSFAVQKKEEKERVARSAH.

Belongs to the universal ribosomal protein uS7 family. As to quaternary structure, part of the 30S ribosomal subunit.

Functionally, one of the primary rRNA binding proteins, it binds directly to 16S rRNA where it nucleates assembly of the head domain of the 30S subunit. Is located at the subunit interface close to the decoding center. The sequence is that of Small ribosomal subunit protein uS7 from Methanosphaera stadtmanae (strain ATCC 43021 / DSM 3091 / JCM 11832 / MCB-3).